The primary structure comprises 206 residues: Small ribosomal subunit protein uS4 (206 aa).

In terms of domain architecture, S4 RNA-binding spans 96-156 (CRLDNVVYRM…EKSLNQLRIV (61 aa)).

It belongs to the universal ribosomal protein uS4 family. In terms of assembly, part of the 30S ribosomal subunit. Contacts protein S5. The interaction surface between S4 and S5 is involved in control of translational fidelity.

One of the primary rRNA binding proteins, it binds directly to 16S rRNA where it nucleates assembly of the body of the 30S subunit. In terms of biological role, with S5 and S12 plays an important role in translational accuracy. The polypeptide is Small ribosomal subunit protein uS4 (Pseudomonas entomophila (strain L48)).